The sequence spans 779 residues: Protocadherin beta-8 (779 aa).

A signal peptide spans 1 to 28 (METALTKTPEKRQVIFLAILLLLWEASS). Residues 29–690 (EAISYSMPEE…QEEDMLTLYL (662 aa)) are Extracellular-facing. 5 consecutive Cadherin domains span residues 75–133 (LQLD…FPEF), 134–242 (PDTE…APQF), 243–346 (LQSL…APKL), 347–450 (TISS…APAF), and 451–560 (TQTS…APFV). C96 and C102 are disulfide-bonded. N169 carries N-linked (GlcNAc...) asparagine glycosylation. A glycan (O-linked (Man) serine) is linked at S223. T225 and T227 each carry an O-linked (Man) threonine glycan. Residue N417 is glycosylated (N-linked (GlcNAc...) asparagine). The N-linked (GlcNAc...) asparagine glycan is linked to N566. One can recognise a Cadherin 6 domain in the interval 575–675 (LPRAAEPGYL…SQPYLPLPEV (101 aa)). Residues 691–711 (VIALASVSSLFLLSVLLFVGV) form a helical membrane-spanning segment. At 712–779 (KLCKKAREAS…IIPSSLLQDS (68 aa)) the chain is on the cytoplasmic side.

As to quaternary structure, forms homodimers in trans (molecules expressed by two different cells). Forms promiscuous heterodimers in cis (at the plasma membrane of the same cell) with other protocadherins.

The protein resides in the cell membrane. Calcium-dependent cell-adhesion protein involved in cells self-recognition and non-self discrimination. Thereby, it is involved in the establishment and maintenance of specific neuronal connections in the brain. The polypeptide is Protocadherin beta-8 (Mus musculus (Mouse)).